A 204-amino-acid polypeptide reads, in one-letter code: Large ribosomal subunit protein uL4 (204 aa).

Residues 42–55 are compositionally biased toward polar residues; sequence GSRQGSKAQKNRSA. Positions 42-85 are disordered; sequence GSRQGSKAQKNRSAVSGGGKRPWAQKGTGRARAGTTRGPIWRSG. A compositionally biased stretch (low complexity) spans 68–79; the sequence is GTGRARAGTTRG.

This sequence belongs to the universal ribosomal protein uL4 family. In terms of assembly, part of the 50S ribosomal subunit.

One of the primary rRNA binding proteins, this protein initially binds near the 5'-end of the 23S rRNA. It is important during the early stages of 50S assembly. It makes multiple contacts with different domains of the 23S rRNA in the assembled 50S subunit and ribosome. Functionally, forms part of the polypeptide exit tunnel. The sequence is that of Large ribosomal subunit protein uL4 from Vesicomyosocius okutanii subsp. Calyptogena okutanii (strain HA).